The sequence spans 147 residues: Helix-loop-helix protein 13 (147 aa).

The bHLH domain maps to 41–93; sequence EERQTASIRERKRMCSINVAFIELRNYIPTFPYEKRLSKIDTLNLAIAYINML.

Expressed in hermaphrodite dopaminergic neurons (ADE, CEP, and PDE).

The protein localises to the nucleus. It is found in the cytoplasm. Functionally, transcriptional activator. Shown to have a role in the negative regulation of exit from L1 arrest and dauer diapause dependent on IIS signaling (insulin and insulin-like growth factor (IGF) signaling). Hypodermal expression is regulated by IIS/daf-16 while neuronal expression is not under the control of IIS/daf-16. The chain is Helix-loop-helix protein 13 from Caenorhabditis elegans.